Reading from the N-terminus, the 540-residue chain is Glucose-6-phosphate isomerase (540 aa).

Glu-346 functions as the Proton donor in the catalytic mechanism. Active-site residues include His-377 and Lys-505.

This sequence belongs to the GPI family.

The protein localises to the cytoplasm. It carries out the reaction alpha-D-glucose 6-phosphate = beta-D-fructose 6-phosphate. The protein operates within carbohydrate biosynthesis; gluconeogenesis. It functions in the pathway carbohydrate degradation; glycolysis; D-glyceraldehyde 3-phosphate and glycerone phosphate from D-glucose: step 2/4. In terms of biological role, catalyzes the reversible isomerization of glucose-6-phosphate to fructose-6-phosphate. The chain is Glucose-6-phosphate isomerase from Francisella tularensis subsp. tularensis (strain SCHU S4 / Schu 4).